The sequence spans 153 residues: Profilin (153 aa).

The protein belongs to the profilin family. As to quaternary structure, occurs in many kinds of cells as a complex with monomeric actin in a 1:1 ratio.

It is found in the cytoplasm. Its subcellular location is the cytoskeleton. Functionally, binds to actin and affects the structure of the cytoskeleton. At high concentrations, profilin prevents the polymerization of actin, whereas it enhances it at low concentrations. By binding to PIP2, it inhibits the formation of IP3 and DG. This chain is Profilin, found in Tetrahymena pyriformis.